Reading from the N-terminus, the 282-residue chain is MSLVTSLTYVLPHRLLSSLARALAYSKSPATKQWLIDTVTRKFGVDLSEAQEPDPRVYPTFNAFFTRALKPGARVPDADPQALLMPADGRISQLGPIENGRIFQAKGQSFTAAELLGDESAAVPFHNGLFATVYLSPKDYHRVHMPWSGTLRETVHVPGRLFSVGPDAVRNVPRLFARNERLVCHFDTDFGPMASVMVGALLVSGVETVWSGVEIPRYGDRITRKDYRGKGITLERFAEMARFNYGSTVIVLLPPGVAALEGGLAAESSVRLGQALARRQVA.

Catalysis depends on charge relay system; for autoendoproteolytic cleavage activity residues Asp-88, His-144, and Ser-247. The Schiff-base intermediate with substrate; via pyruvic acid; for decarboxylase activity role is filled by Ser-247. The residue at position 247 (Ser-247) is a Pyruvic acid (Ser); by autocatalysis.

Belongs to the phosphatidylserine decarboxylase family. PSD-B subfamily. Prokaryotic type I sub-subfamily. Heterodimer of a large membrane-associated beta subunit and a small pyruvoyl-containing alpha subunit. Requires pyruvate as cofactor. Post-translationally, is synthesized initially as an inactive proenzyme. Formation of the active enzyme involves a self-maturation process in which the active site pyruvoyl group is generated from an internal serine residue via an autocatalytic post-translational modification. Two non-identical subunits are generated from the proenzyme in this reaction, and the pyruvate is formed at the N-terminus of the alpha chain, which is derived from the carboxyl end of the proenzyme. The autoendoproteolytic cleavage occurs by a canonical serine protease mechanism, in which the side chain hydroxyl group of the serine supplies its oxygen atom to form the C-terminus of the beta chain, while the remainder of the serine residue undergoes an oxidative deamination to produce ammonia and the pyruvoyl prosthetic group on the alpha chain. During this reaction, the Ser that is part of the protease active site of the proenzyme becomes the pyruvoyl prosthetic group, which constitutes an essential element of the active site of the mature decarboxylase.

Its subcellular location is the cell membrane. The enzyme catalyses a 1,2-diacyl-sn-glycero-3-phospho-L-serine + H(+) = a 1,2-diacyl-sn-glycero-3-phosphoethanolamine + CO2. It participates in phospholipid metabolism; phosphatidylethanolamine biosynthesis; phosphatidylethanolamine from CDP-diacylglycerol: step 2/2. Functionally, catalyzes the formation of phosphatidylethanolamine (PtdEtn) from phosphatidylserine (PtdSer). The chain is Phosphatidylserine decarboxylase proenzyme from Xanthomonas campestris pv. campestris (strain 8004).